We begin with the raw amino-acid sequence, 150 residues long: MKGIAVFLVFIFCWTTSTLSSFWQFQRMVKHITGRSAFFSYYGYGCYCGLGGRGIPVDATDRCCWAHDCCYHKLKEYGCQPILNAYQFAIVNGTVTCGCTMGGGCLCGQKACECDKLSVYCFKENLATYEKTFKQLFPTRPQCGRDKLHC.

The N-terminal stretch at 1-20 is a signal peptide; it reads MKGIAVFLVFIFCWTTSTLS. 8 disulfides stabilise this stretch: Cys46/Cys143, Cys48/Cys64, Cys63/Cys121, Cys69/Cys150, Cys70/Cys114, Cys79/Cys107, Cys97/Cys112, and Cys99/Cys105. Residues Tyr47, Gly49, and Gly51 each coordinate Ca(2+). The active site involves His67. Asp68 provides a ligand contact to Ca(2+). Asn92 carries N-linked (GlcNAc...) asparagine glycosylation. The active site involves Asp115.

The protein belongs to the phospholipase A2 family. It depends on Ca(2+) as a cofactor.

It localises to the secreted. The enzyme catalyses a 1,2-diacyl-sn-glycero-3-phosphocholine + H2O = a 1-acyl-sn-glycero-3-phosphocholine + a fatty acid + H(+). PA2 catalyzes the calcium-dependent hydrolysis of the 2-acyl groups in 3-sn-phosphoglycerides. The sequence is that of Group IIC secretory phospholipase A2 (Pla2g2c) from Rattus norvegicus (Rat).